The chain runs to 78 residues: Musculoskeletal embryonic nuclear protein 1 (78 aa).

2 disordered regions span residues 1–33 and 45–78; these read MSQP…QEIK and QMGS…SVFG. Positions 6–14 match the Nuclear localization signal motif; the sequence is PVKKKRPPV. Positions 64–78 are enriched in basic and acidic residues; that stretch reads VFEKSKDEPPKSVFG.

This sequence belongs to the MUSTN1 family. As to expression, predominantly expressed in heart and skeletal muscle. Detected in skeletal muscle satellite cells where expression increases with cell proliferation.

The protein resides in the nucleus. Its function is as follows. Promotes the differentiation and proliferation of skeletal muscle satellite cells. This is Musculoskeletal embryonic nuclear protein 1 (MUSTN1) from Gallus gallus (Chicken).